The chain runs to 1509 residues: Dynein axonemal assembly factor 1 homolog (1509 aa).

6 LRR repeats span residues 34-56, 57-78, 79-100, 101-122, 125-146, and 150-171; these read RLND…EEYT, ELKC…EKLS, KLKC…EPCR, ELDT…GTNI, VLNT…SDLV, and TLSV…KIFE. Residues 185-223 form the LRRCT domain; sequence PVVSRLPQYRKTLILACKELTYLDSRPVFPRDRACAEAW. 4 disordered regions span residues 252–280, 306–327, 962–1008, and 1103–1122; these read CTIR…DDTC, HPTS…ATSS, SGDL…DSKN, and TLQT…KLRN. The span at 309-318 shows a compositional bias: low complexity; the sequence is SESGASTSSS. Over residues 978–990 the composition is skewed to acidic residues; the sequence is SESEDYDTADDEY. A compositionally biased stretch (polar residues) spans 1103–1112; the sequence is TLQTSFSTVG.

This sequence belongs to the DNAAF1 family.

Its subcellular location is the cell projection. It localises to the cilium. Cilium-specific protein required for cilia structures. The sequence is that of Dynein axonemal assembly factor 1 homolog (dtr) from Drosophila yakuba (Fruit fly).